Here is a 406-residue protein sequence, read N- to C-terminus: 2,3-bisphosphoglycerate-independent phosphoglycerate mutase (406 aa).

It belongs to the BPG-independent phosphoglycerate mutase family. A-PGAM subfamily.

It carries out the reaction (2R)-2-phosphoglycerate = (2R)-3-phosphoglycerate. The protein operates within carbohydrate degradation; glycolysis; pyruvate from D-glyceraldehyde 3-phosphate: step 3/5. Its function is as follows. Catalyzes the interconversion of 2-phosphoglycerate and 3-phosphoglycerate. This chain is 2,3-bisphosphoglycerate-independent phosphoglycerate mutase, found in Methanococcus vannielii (strain ATCC 35089 / DSM 1224 / JCM 13029 / OCM 148 / SB).